A 491-amino-acid chain; its full sequence is Protein SET DOMAIN GROUP 40 (491 aa).

Residues 36-278 (HSLSVSDFPD…LGEQVLLCYG (243 aa)) form the SET domain.

Belongs to the class V-like SAM-binding methyltransferase superfamily.

The chain is Protein SET DOMAIN GROUP 40 (SDG40) from Arabidopsis thaliana (Mouse-ear cress).